The chain runs to 544 residues: Chaperonin GroEL (544 aa).

ATP contacts are provided by residues 29–32 (TLGP), 86–90 (DGTTT), Gly-413, 476–478 (NAA), and Asp-492.

It belongs to the chaperonin (HSP60) family. In terms of assembly, forms a cylinder of 14 subunits composed of two heptameric rings stacked back-to-back. Interacts with the co-chaperonin GroES.

Its subcellular location is the cytoplasm. It catalyses the reaction ATP + H2O + a folded polypeptide = ADP + phosphate + an unfolded polypeptide.. Its function is as follows. Together with its co-chaperonin GroES, plays an essential role in assisting protein folding. The GroEL-GroES system forms a nano-cage that allows encapsulation of the non-native substrate proteins and provides a physical environment optimized to promote and accelerate protein folding. The polypeptide is Chaperonin GroEL (Bacillus pumilus (strain SAFR-032)).